The chain runs to 316 residues: 4-hydroxy-3-methylbut-2-enyl diphosphate reductase (316 aa).

C12 serves as a coordination point for [4Fe-4S] cluster. (2E)-4-hydroxy-3-methylbut-2-enyl diphosphate-binding residues include H41 and H74. The dimethylallyl diphosphate site is built by H41 and H74. Isopentenyl diphosphate-binding residues include H41 and H74. Residue C96 coordinates [4Fe-4S] cluster. H124 is a (2E)-4-hydroxy-3-methylbut-2-enyl diphosphate binding site. Position 124 (H124) interacts with dimethylallyl diphosphate. H124 is an isopentenyl diphosphate binding site. E126 functions as the Proton donor in the catalytic mechanism. T167 is a binding site for (2E)-4-hydroxy-3-methylbut-2-enyl diphosphate. C197 provides a ligand contact to [4Fe-4S] cluster. (2E)-4-hydroxy-3-methylbut-2-enyl diphosphate contacts are provided by S225, S226, N227, and S269. Dimethylallyl diphosphate-binding residues include S225, S226, N227, and S269. Isopentenyl diphosphate is bound by residues S225, S226, N227, and S269.

The protein belongs to the IspH family. As to quaternary structure, homodimer. [4Fe-4S] cluster is required as a cofactor.

It catalyses the reaction isopentenyl diphosphate + 2 oxidized [2Fe-2S]-[ferredoxin] + H2O = (2E)-4-hydroxy-3-methylbut-2-enyl diphosphate + 2 reduced [2Fe-2S]-[ferredoxin] + 2 H(+). The catalysed reaction is dimethylallyl diphosphate + 2 oxidized [2Fe-2S]-[ferredoxin] + H2O = (2E)-4-hydroxy-3-methylbut-2-enyl diphosphate + 2 reduced [2Fe-2S]-[ferredoxin] + 2 H(+). It participates in isoprenoid biosynthesis; dimethylallyl diphosphate biosynthesis; dimethylallyl diphosphate from (2E)-4-hydroxy-3-methylbutenyl diphosphate: step 1/1. The protein operates within isoprenoid biosynthesis; isopentenyl diphosphate biosynthesis via DXP pathway; isopentenyl diphosphate from 1-deoxy-D-xylulose 5-phosphate: step 6/6. Functionally, catalyzes the conversion of 1-hydroxy-2-methyl-2-(E)-butenyl 4-diphosphate (HMBPP) into a mixture of isopentenyl diphosphate (IPP) and dimethylallyl diphosphate (DMAPP). Acts in the terminal step of the DOXP/MEP pathway for isoprenoid precursor biosynthesis. The sequence is that of 4-hydroxy-3-methylbut-2-enyl diphosphate reductase from Salmonella paratyphi C (strain RKS4594).